The primary structure comprises 317 residues: Melanocyte-stimulating hormone receptor (317 aa).

Residues 1–37 (MAVQGSQRRLLGSLNSTPTAIPQLGLAANQTGARCLE) are Extracellular-facing. A glycan (N-linked (GlcNAc...) asparagine) is linked at N29. Residues 38–63 (VSISDGLFLSLGLVSLVENALVVATI) traverse the membrane as a helical segment. At 64 to 72 (AKNRNLHSP) the chain is on the cytoplasmic side. Residues 73-93 (MYCFICCLALSDLLVSGSNVL) traverse the membrane as a helical segment. Residues 94–118 (ETAVILLLEAGALVARAAVLQQLDN) lie on the Extracellular side of the membrane. The chain crosses the membrane as a helical span at residues 119-140 (VIDVITCSSMLSSLCFLGAIAV). The Cytoplasmic segment spans residues 141 to 163 (DRYISIFYALRYHSIVTLPRARR). The helical transmembrane segment at 164–183 (AVAAIWVASVVFSTLFIAYY) threads the bilayer. Residues 184–191 (DHVAVLLC) lie on the Extracellular side of the membrane. Residues 192-211 (LVVFFLAMLVLMAVLYVHML) form a helical membrane-spanning segment. Over 212-240 (ARACQHAQGIARLHKRQRPVHQGFGLKGA) the chain is Cytoplasmic. The chain crosses the membrane as a helical span at residues 241–266 (VTLTILLGIFFLCWGPFFLHLTLIVL). Residues 267-279 (CPEHPTCGCIFKN) are Extracellular-facing. A helical membrane pass occupies residues 280-300 (FNLFLALIICNAIIDPLIYAF). Residues 301 to 317 (HSQELRRTLKEVLTCSW) lie on the Cytoplasmic side of the membrane. C315 is lipidated: S-palmitoyl cysteine.

The protein belongs to the G-protein coupled receptor 1 family. As to quaternary structure, interacts with MGRN1, but does not undergo MGRN1-mediated ubiquitination; this interaction competes with GNAS-binding and thus inhibits agonist-induced cAMP production. Interacts with OPN3; the interaction results in a decrease in MC1R-mediated cAMP signaling and ultimately a decrease in melanin production in melanocytes. As to expression, expressed in melanocytes. Expressed in corticoadrenal tissue.

It is found in the cell membrane. Its function is as follows. Receptor for MSH (alpha, beta and gamma) and ACTH. The activity of this receptor is mediated by G proteins which activate adenylate cyclase. Mediates melanogenesis, the production of eumelanin (black/brown) and phaeomelanin (red/yellow), via regulation of cAMP signaling in melanocytes. In Homo sapiens (Human), this protein is Melanocyte-stimulating hormone receptor (MC1R).